The chain runs to 284 residues: Sulfotransferase 2A1 (284 aa).

Residues Lys-43, Ser-44, Gly-45, Thr-46, Asn-47, and Trp-48 each contribute to the 3'-phosphoadenylyl sulfate site. The Proton acceptor role is filled by His-98. 3'-phosphoadenylyl sulfate is bound by residues Arg-120, Ser-128, Tyr-183, Ser-217, Met-222, Arg-246, Lys-247, and Gly-248.

It belongs to the sulfotransferase 1 family. In terms of assembly, homodimer.

The protein resides in the cytoplasm. The enzyme catalyses an alcohol + 3'-phosphoadenylyl sulfate = an alkyl sulfate + adenosine 3',5'-bisphosphate + H(+). It carries out the reaction taurolithocholate + 3'-phosphoadenylyl sulfate = taurolithocholate 3-sulfate + adenosine 3',5'-bisphosphate + H(+). It catalyses the reaction lithocholate + 3'-phosphoadenylyl sulfate = lithocholate sulfate + adenosine 3',5'-bisphosphate + H(+). The catalysed reaction is (24S)-hydroxycholesterol + 3'-phosphoadenylyl sulfate = (24S)-hydroxycholesterol 24-sulfate + adenosine 3',5'-bisphosphate + H(+). The enzyme catalyses (24S)-hydroxycholesterol + 3'-phosphoadenylyl sulfate = (24S)-hydroxycholesterol 3-sulfate + adenosine 3',5'-bisphosphate + H(+). It carries out the reaction (24S)-hydroxycholesterol 24-sulfate + 3'-phosphoadenylyl sulfate = (24S)-hydroxycholesterol 3,24-disulfate + adenosine 3',5'-bisphosphate + H(+). It catalyses the reaction 3beta-hydroxyandrost-5-en-17-one + 3'-phosphoadenylyl sulfate = dehydroepiandrosterone 3-sulfate + adenosine 3',5'-bisphosphate + H(+). The catalysed reaction is pregnenolone + 3'-phosphoadenylyl sulfate = pregnenolone sulfate + adenosine 3',5'-bisphosphate + H(+). The enzyme catalyses androsterone + 3'-phosphoadenylyl sulfate = androsterone 3alpha-sulfate + adenosine 3',5'-bisphosphate + H(+). Sulfotransferase that utilizes 3'-phospho-5'-adenylyl sulfate (PAPS) as sulfonate donor to catalyze the sulfonation of steroids and bile acids in the liver and adrenal glands. Mediates the sulfation of a wide range of steroids and sterols, including pregnenolone, androsterone, DHEA, bile acids, cholesterol and as well many xenobiotics that contain alcohol and phenol functional groups. Sulfonation increases the water solubility of most compounds, and therefore their renal excretion, but it can also result in bioactivation to form active metabolites. Plays an important role in maintening steroid and lipid homeostasis. Plays a key role in bile acid metabolism. In addition, catalyzes the metabolic activation of potent carcinogenic polycyclic arylmethanols. The chain is Sulfotransferase 2A1 (Sult2a1) from Rattus norvegicus (Rat).